The chain runs to 248 residues: TPR repeat-containing protein slr0751 (248 aa).

4 TPR repeats span residues 61-94, 95-128, 129-162, and 163-196; these read PEAI…SPDS, PETH…DRYY, IPPY…DPNR, and YKAY…RPDY.

This is TPR repeat-containing protein slr0751 from Synechocystis sp. (strain ATCC 27184 / PCC 6803 / Kazusa).